Consider the following 595-residue polypeptide: Inactive serine/threonine-protein kinase PLK5 (595 aa).

Residues 27-279 (YRRGKLIGKG…LDHLLQDDFF (253 aa)) form the Protein kinase domain. Residues 33–41 (IGKGAFSRC) and lysine 56 contribute to the ATP site. The active-site Proton acceptor is aspartate 150. The interval 326 to 350 (FTSKEASGPGEEGTEPDHMEAGNEE) is disordered. The segment covering 340-350 (EPDHMEAGNEE) has biased composition (basic and acidic residues). 2 POLO box domains span residues 413–491 (WAPK…YMQR) and 509–595 (DISL…LQSV).

This sequence belongs to the protein kinase superfamily. Ser/Thr protein kinase family. CDC5/Polo subfamily. As to expression, expressed in the cerebellum, eye and brain cortex (at protein level). Expressed in highly differentiated tissues, such as brain, eyes and ovary. Not detectable in proliferating tissues, such as the colon, spleen and placenta.

It is found in the nucleus. The protein localises to the nucleolus. The protein resides in the cytoplasm. Functionally, inactive serine/threonine-protein kinase that plays a role in cell cycle progression and neuronal differentiation. The protein is Inactive serine/threonine-protein kinase PLK5 of Mus musculus (Mouse).